We begin with the raw amino-acid sequence, 339 residues long: 3-isopropylmalate dehydrogenase (339 aa).

Substrate is bound by residues arginine 88, arginine 98, arginine 122, and aspartate 212. Mg(2+)-binding residues include aspartate 212, aspartate 236, and aspartate 240. 272 to 284 (GSAPDIAGQGIAD) is a binding site for NAD(+).

It belongs to the isocitrate and isopropylmalate dehydrogenases family. LeuB type 2 subfamily. As to quaternary structure, homodimer. Requires Mg(2+) as cofactor. The cofactor is Mn(2+).

It is found in the cytoplasm. It catalyses the reaction (2R,3S)-3-isopropylmalate + NAD(+) = 4-methyl-2-oxopentanoate + CO2 + NADH. Its pathway is amino-acid biosynthesis; L-leucine biosynthesis; L-leucine from 3-methyl-2-oxobutanoate: step 3/4. Catalyzes the oxidation of 3-carboxy-2-hydroxy-4-methylpentanoate (3-isopropylmalate) to 3-carboxy-4-methyl-2-oxopentanoate. The product decarboxylates to 4-methyl-2 oxopentanoate. The chain is 3-isopropylmalate dehydrogenase from Corynebacterium diphtheriae (strain ATCC 700971 / NCTC 13129 / Biotype gravis).